Here is a 517-residue protein sequence, read N- to C-terminus: Alpha-amylase (517 aa).

The first 21 residues, methionine 1–glycine 21, serve as a signal peptide directing secretion. The cysteines at positions 52 and 108 are disulfide-linked. Residues asparagine 122, arginine 178, and aspartate 187 each contribute to the Ca(2+) site. Chloride is bound at residue arginine 215. Aspartate 217 serves as the catalytic Nucleophile. Histidine 221 contacts Ca(2+). Glutamate 253 acts as the Proton donor in catalysis. Arginine 355 is a binding site for chloride. Intrachain disulfides connect cysteine 397–cysteine 403 and cysteine 470–cysteine 482.

Belongs to the glycosyl hydrolase 13 family. Monomer. It depends on Ca(2+) as a cofactor. Requires chloride as cofactor.

It localises to the secreted. The enzyme catalyses Endohydrolysis of (1-&gt;4)-alpha-D-glucosidic linkages in polysaccharides containing three or more (1-&gt;4)-alpha-linked D-glucose units.. With respect to regulation, activated by chloride ions. Inhibited by acarbose. Not inhibited by wheat alpha-amylase inhibitors 1 (WI-1, the tetrameric form) or 3 (WI-3, the monomeric form) and bean alpha-amylase inhibitor 1 (alphaAI-1). In Acarus siro (Flour mite), this protein is Alpha-amylase.